A 255-amino-acid chain; its full sequence is MMTAEVRTPEQGGGPLTTEPRAPRSAPGHADASAPAFGPETDPRDIIRWALAAHPDLLMPSAFNLNGVVLLDLAAQAGYRGEVVFVDTGYHFPETLATRDRLESRYPELTFVTLNAGASPDDGQTPPDLYASDPDACCAARKVDPLQRYLKEQGPSALLNARSRDQASTRADIPFVEEGGARRRVNPLAHWTREQLEAYAAEHDLPVNPLYFDGFLSIGCWPCTRAVKPGEDARAGRWAGKGKTECGLWQGENKL.

The interval 1-39 is disordered; it reads MMTAEVRTPEQGGGPLTTEPRAPRSAPGHADASAPAFGP. Cysteine 137, cysteine 138, cysteine 220, and cysteine 223 together coordinate [4Fe-4S] cluster. Cysteine 246 acts as the Nucleophile; cysteine thiosulfonate intermediate in catalysis.

The protein belongs to the PAPS reductase family. CysH subfamily. Requires [4Fe-4S] cluster as cofactor.

It localises to the cytoplasm. The catalysed reaction is [thioredoxin]-disulfide + sulfite + AMP + 2 H(+) = adenosine 5'-phosphosulfate + [thioredoxin]-dithiol. It participates in sulfur metabolism; hydrogen sulfide biosynthesis; sulfite from sulfate. Catalyzes the formation of sulfite from adenosine 5'-phosphosulfate (APS) using thioredoxin as an electron donor. This Deinococcus radiodurans (strain ATCC 13939 / DSM 20539 / JCM 16871 / CCUG 27074 / LMG 4051 / NBRC 15346 / NCIMB 9279 / VKM B-1422 / R1) protein is Adenosine 5'-phosphosulfate reductase.